A 91-amino-acid polypeptide reads, in one-letter code: Sec-independent protein translocase protein TatA (91 aa).

Residues 1–21 (MGIFDWKHWIVILIVVVLVFG) traverse the membrane as a helical segment. Residues 41–91 (KAMNDDDKPAEQPAPQPQQAQPAPQGSPLNQPHTIDAQAHKVDEPIRKDQV) are disordered. Over residues 51-64 (EQPAPQPQQAQPAP) the composition is skewed to low complexity. The segment covering 78–91 (QAHKVDEPIRKDQV) has biased composition (basic and acidic residues).

The protein belongs to the TatA/E family. The Tat system comprises two distinct complexes: a TatABC complex, containing multiple copies of TatA, TatB and TatC subunits, and a separate TatA complex, containing only TatA subunits. Substrates initially bind to the TatABC complex, which probably triggers association of the separate TatA complex to form the active translocon.

The protein localises to the cell inner membrane. In terms of biological role, part of the twin-arginine translocation (Tat) system that transports large folded proteins containing a characteristic twin-arginine motif in their signal peptide across membranes. TatA could form the protein-conducting channel of the Tat system. This is Sec-independent protein translocase protein TatA from Pseudomonas syringae pv. syringae (strain B728a).